Here is a 231-residue protein sequence, read N- to C-terminus: 7-cyano-7-deazaguanine synthase (231 aa).

Residue 8–18 (FSGGQDSTTCL) participates in ATP binding. Residues C188, C197, C200, and C203 each contribute to the Zn(2+) site.

This sequence belongs to the QueC family. It depends on Zn(2+) as a cofactor.

It carries out the reaction 7-carboxy-7-deazaguanine + NH4(+) + ATP = 7-cyano-7-deazaguanine + ADP + phosphate + H2O + H(+). The protein operates within purine metabolism; 7-cyano-7-deazaguanine biosynthesis. Its function is as follows. Catalyzes the ATP-dependent conversion of 7-carboxy-7-deazaguanine (CDG) to 7-cyano-7-deazaguanine (preQ(0)). The protein is 7-cyano-7-deazaguanine synthase of Salmonella choleraesuis (strain SC-B67).